Reading from the N-terminus, the 405-residue chain is 4-hydroxy-3-methylbut-2-enyl diphosphate reductase (405 aa).

A [4Fe-4S] cluster-binding site is contributed by cysteine 66. Histidine 96 lines the (2E)-4-hydroxy-3-methylbut-2-enyl diphosphate pocket. Histidine 96 lines the dimethylallyl diphosphate pocket. Histidine 96 is an isopentenyl diphosphate binding site. Cysteine 157 lines the [4Fe-4S] cluster pocket. (2E)-4-hydroxy-3-methylbut-2-enyl diphosphate is bound at residue histidine 185. Residue histidine 185 coordinates dimethylallyl diphosphate. Histidine 185 is a binding site for isopentenyl diphosphate. The Proton donor role is filled by glutamate 187. (2E)-4-hydroxy-3-methylbut-2-enyl diphosphate is bound at residue threonine 250. Cysteine 288 contributes to the [4Fe-4S] cluster binding site. The (2E)-4-hydroxy-3-methylbut-2-enyl diphosphate site is built by serine 317, serine 318, asparagine 319, and serine 380. Dimethylallyl diphosphate contacts are provided by serine 317, serine 318, asparagine 319, and serine 380. The isopentenyl diphosphate site is built by serine 317, serine 318, asparagine 319, and serine 380.

The protein belongs to the IspH family. The cofactor is [4Fe-4S] cluster.

It catalyses the reaction isopentenyl diphosphate + 2 oxidized [2Fe-2S]-[ferredoxin] + H2O = (2E)-4-hydroxy-3-methylbut-2-enyl diphosphate + 2 reduced [2Fe-2S]-[ferredoxin] + 2 H(+). The catalysed reaction is dimethylallyl diphosphate + 2 oxidized [2Fe-2S]-[ferredoxin] + H2O = (2E)-4-hydroxy-3-methylbut-2-enyl diphosphate + 2 reduced [2Fe-2S]-[ferredoxin] + 2 H(+). The protein operates within isoprenoid biosynthesis; dimethylallyl diphosphate biosynthesis; dimethylallyl diphosphate from (2E)-4-hydroxy-3-methylbutenyl diphosphate: step 1/1. Its pathway is isoprenoid biosynthesis; isopentenyl diphosphate biosynthesis via DXP pathway; isopentenyl diphosphate from 1-deoxy-D-xylulose 5-phosphate: step 6/6. In terms of biological role, catalyzes the conversion of 1-hydroxy-2-methyl-2-(E)-butenyl 4-diphosphate (HMBPP) into a mixture of isopentenyl diphosphate (IPP) and dimethylallyl diphosphate (DMAPP). Acts in the terminal step of the DOXP/MEP pathway for isoprenoid precursor biosynthesis. The sequence is that of 4-hydroxy-3-methylbut-2-enyl diphosphate reductase from Prochlorococcus marinus (strain SARG / CCMP1375 / SS120).